The sequence spans 350 residues: Ion-translocating oxidoreductase complex subunit D (350 aa).

The next 4 membrane-spanning stretches (helical) occupy residues 37-57 (YFFG…ALTA), 68-88 (AVLS…IGVA), 89-109 (IPPI…IVLV), and 120-140 (IFNP…VQMT). T185 carries the FMN phosphoryl threonine modification. Helical transmembrane passes span 212 to 232 (GYGV…LIML), 239 to 259 (WHIS…GYLL), 265 to 285 (VGPL…FIAT), 291 to 311 (ATSV…VYVI), and 315 to 335 (GGYP…APFI).

The protein belongs to the NqrB/RnfD family. In terms of assembly, the complex is composed of six subunits: RnfA, RnfB, RnfC, RnfD, RnfE and RnfG. The cofactor is FMN.

The protein localises to the cell inner membrane. In terms of biological role, part of a membrane-bound complex that couples electron transfer with translocation of ions across the membrane. The protein is Ion-translocating oxidoreductase complex subunit D of Shewanella pealeana (strain ATCC 700345 / ANG-SQ1).